The sequence spans 882 residues: Protein O-mannosyl-transferase TMTC1 (882 aa).

The Cytoplasmic portion of the chain corresponds to 1–20 (MVVTTSARGGGGDRTPSRRR). Residues 1–20 (MVVTTSARGGGGDRTPSRRR) are disordered. Residues 21–41 (GCGLAPAGAAALLAGASCLCY) traverse the membrane as a helical segment. Topologically, residues 42–110 (GRSLQGEFVH…KLNIFLTGMN (69 aa)) are extracellular. An N-linked (GlcNAc...) asparagine glycan is attached at N86. The helical transmembrane segment at 111–131 (PFYFHAVNIILHCLVTLVLMY) threads the bilayer. The Cytoplasmic portion of the chain corresponds to 132–137 (TCDKTV). Residues 138–157 (FKNRGLAFVTALLFAVHPIH) traverse the membrane as a helical segment. Topologically, residues 158–160 (TEA) are extracellular. Residues 161 to 181 (VAGIVGRADVLACLLFLLAFL) form a helical membrane-spanning segment. Residues 182 to 197 (SYNRSLDQGCVGGSFP) are Cytoplasmic-facing. Residues 198–218 (STVSPFFLLLSLFLGTCAMLV) form a helical membrane-spanning segment. The Extracellular segment spans residues 219 to 221 (KET). The chain crosses the membrane as a helical span at residues 222–238 (GITVFGVCLVYDLFSLS). Residues 239 to 313 (NKQDKSSNGA…SPRAVWSMMR (75 aa)) are Cytoplasmic-facing. Residues 246 to 277 (NGALCPRSPQQPGSPQPSSLPGHPHRENGKQQ) form a disordered region. Positions 251–267 (PRSPQQPGSPQPSSLPG) are enriched in low complexity. The chain crosses the membrane as a helical span at residues 314–334 (FLTYSYLLAFNVWLLLAPVTL). At 335–354 (CYDWQVGSIPLVETIWDMRN) the chain is on the extracellular side. Residues 355–375 (LATIFLAVVMALLSLHCLAAF) traverse the membrane as a helical segment. Residues 376–381 (KRLEHK) lie on the Cytoplasmic side of the membrane. The helical transmembrane segment at 382 to 402 (EVLVGLLFLVFPFIPASNLFF) threads the bilayer. Position 403 (R403) is a topological domain, extracellular. The chain crosses the membrane as a helical span at residues 404-424 (VGFVVAERVLYMPSMGYCILF). The Cytoplasmic portion of the chain corresponds to 425 to 438 (VHGLSKLCTWLNRC). The chain crosses the membrane as a helical span at residues 439–459 (GATTLIVSTVLLLLLFSWKTV). Over 460-882 (KQNEIWLSRE…LQEVREKDQT (423 aa)) the chain is Extracellular. TPR repeat units lie at residues 483-516 (AKVH…YPRH), 517-547 (ASAL…HPQH), 548-581 (NRAL…GPEF), 582-615 (ADAY…CPDS), 616-649 (SDLH…SPSH), 650-682 (HVAM…VAHK), 683-716 (AEIL…QPSQ), 751-784 (LECY…KPKD), 789-822 (SELF…NPDQ), and 823-856 (AQAW…VPDS).

The protein belongs to the TMTC family. May interact with FAM168B.

The protein resides in the membrane. It is found in the endoplasmic reticulum. It catalyses the reaction a di-trans,poly-cis-dolichyl beta-D-mannosyl phosphate + L-seryl-[protein] = 3-O-(alpha-D-mannosyl)-L-seryl-[protein] + a di-trans,poly-cis-dolichyl phosphate + H(+). The enzyme catalyses a di-trans,poly-cis-dolichyl beta-D-mannosyl phosphate + L-threonyl-[protein] = 3-O-(alpha-D-mannosyl)-L-threonyl-[protein] + a di-trans,poly-cis-dolichyl phosphate + H(+). It participates in protein modification; protein glycosylation. Its function is as follows. Transfers mannosyl residues to the hydroxyl group of serine or threonine residues. The 4 members of the TMTC family are O-mannosyl-transferases dedicated primarily to the cadherin superfamily, each member seems to have a distinct role in decorating the cadherin domains with O-linked mannose glycans at specific regions. Also acts as O-mannosyl-transferase on other proteins such as PDIA3. In Homo sapiens (Human), this protein is Protein O-mannosyl-transferase TMTC1.